The sequence spans 242 residues: Large ribosomal subunit protein uL3 (242 aa).

Gln151 is modified (N5-methylglutamine).

Belongs to the universal ribosomal protein uL3 family. Part of the 50S ribosomal subunit. Forms a cluster with proteins L14 and L19. In terms of processing, methylated by PrmB.

Functionally, one of the primary rRNA binding proteins, it binds directly near the 3'-end of the 23S rRNA, where it nucleates assembly of the 50S subunit. The polypeptide is Large ribosomal subunit protein uL3 (Zymomonas mobilis subsp. mobilis (strain ATCC 31821 / ZM4 / CP4)).